The following is a 71-amino-acid chain: Large ribosomal subunit protein bL31 (71 aa).

Residues C16, C18, C37, and C40 each contribute to the Zn(2+) site.

The protein belongs to the bacterial ribosomal protein bL31 family. Type A subfamily. Part of the 50S ribosomal subunit. Requires Zn(2+) as cofactor.

Binds the 23S rRNA. The chain is Large ribosomal subunit protein bL31 from Pseudomonas putida (strain GB-1).